The following is a 219-amino-acid chain: GPI ethanolamine phosphate transferase, stabilizing subunit (219 aa).

The next 6 membrane-spanning stretches (helical) occupy residues 11 to 31 (YTHLLCIFSIILSVFIPSLFL), 42 to 62 (TWLCICSGFVTAVNLVLYLVV), 86 to 106 (YFLMSCFSFHVIFVLYGAPLI), 113 to 133 (FLFAVILSTFTTVPCLCLLGP), 155 to 175 (LQITTISSFVGAWLGALPIPL), and 189 to 209 (TLGATFGYVAGLVISPLWIYW).

It belongs to the PIGF family. Part of the ethanolamine phosphate transferase 3 complex composed by PIGO and PIGF. Part of the ethanolamine phosphate transferase 2 complex with PIGG. PIGF is required to stabilize PIGG and PIGO.

Its subcellular location is the endoplasmic reticulum membrane. It functions in the pathway glycolipid biosynthesis; glycosylphosphatidylinositol-anchor biosynthesis. In terms of biological role, stabilizing subunit of the ethanolamine phosphate transferase 3 and ethanolamine phosphate transferase 2 complexes that sequentially transfer an ethanolamine phosphate (EtNP) from a phosphatidylethanolamine (PE) to the 6-OH position of the third alpha-1,2-linked mannose and the second alpha-1,6-linked mannose of the alpha-D-Man-(1-&gt;2)-alpha-D-Man-(1-&gt;6)-2-PEtn-alpha-D-Man-(1-&gt;4)-alpha-D-GlcN-(1-&gt;6)-(1-radyl,2-acyl-sn-glycero-3-phospho)-2-acyl-inositol (also termed H6) intermediate to generate a 6-PEtn-alpha-D-Man-(1-&gt;2)-6-PEtn-alpha-D-Man-(1-&gt;6)-2-PEtn-alpha-D-Man-(1-&gt;4)-alpha-D-GlcN-(1-&gt;6)-(1-radyl,2-acyl-sn-glycero-3-phospho)-2-acyl-inositol (also termed H8). Participates in the tenth and eleventh steps of the glycosylphosphatidylinositol-anchor biosynthesis, in association with PIGO and PIGG, respectively. This chain is GPI ethanolamine phosphate transferase, stabilizing subunit, found in Homo sapiens (Human).